The chain runs to 475 residues: uncharacterized protein (475 aa).

This is an uncharacterized protein from Schizosaccharomyces pombe (strain 972 / ATCC 24843) (Fission yeast).